The following is a 251-amino-acid chain: Probable transcriptional regulatory protein Caul_0780 (251 aa).

Belongs to the TACO1 family.

Its subcellular location is the cytoplasm. This is Probable transcriptional regulatory protein Caul_0780 from Caulobacter sp. (strain K31).